The sequence spans 261 residues: 5'-nucleotidase SurE (261 aa).

Residues aspartate 12, aspartate 13, serine 43, and asparagine 100 each coordinate a divalent metal cation.

Belongs to the SurE nucleotidase family. A divalent metal cation serves as cofactor.

The protein localises to the cytoplasm. The catalysed reaction is a ribonucleoside 5'-phosphate + H2O = a ribonucleoside + phosphate. Functionally, nucleotidase that shows phosphatase activity on nucleoside 5'-monophosphates. The protein is 5'-nucleotidase SurE of Protochlamydia amoebophila (strain UWE25).